The sequence spans 640 residues: Serine/threonine-protein kinase ELM1 (640 aa).

The segment at 27–47 (ELDSPPITPTSQTSSFGSSFS) is disordered. The span at 35-47 (PTSQTSSFGSSFS) shows a compositional bias: low complexity. One can recognise a Protein kinase domain in the interval 88-420 (YTLGVSAGSG…PIDSRNHSQI (333 aa)). ATP is bound by residues 94 to 102 (AGSGQFGYV) and lysine 117. Serine 152 carries the post-translational modification Phosphoserine. Catalysis depends on aspartate 259, which acts as the Proton acceptor. Serine 516 and serine 519 each carry phosphoserine. Residues 520 to 529 (LPNLTVNNDK) show a composition bias toward polar residues. Disordered regions lie at residues 520-547 (LPNL…HSSL) and 562-587 (SPKE…MDRT). Positions 530 to 541 (QNSDMKTDRSES) are enriched in basic and acidic residues. Residues 569-579 (RTHINCSQDKP) are compositionally biased toward polar residues.

It belongs to the protein kinase superfamily. Ser/Thr protein kinase family. It depends on Mg(2+) as a cofactor.

It catalyses the reaction L-seryl-[protein] + ATP = O-phospho-L-seryl-[protein] + ADP + H(+). The catalysed reaction is L-threonyl-[protein] + ATP = O-phospho-L-threonyl-[protein] + ADP + H(+). Important role in G1 events required for bud emergence and septin organization. Coordinates cell growth and cell division at G2/M, essential for efficient cytokinesis and for regulation of SWE1. The sequence is that of Serine/threonine-protein kinase ELM1 (ELM1) from Saccharomyces cerevisiae (strain ATCC 204508 / S288c) (Baker's yeast).